Here is a 118-residue protein sequence, read N- to C-terminus: NAD(P)H-quinone oxidoreductase subunit M (118 aa).

This sequence belongs to the complex I NdhM subunit family. In terms of assembly, NDH-1 can be composed of about 15 different subunits; different subcomplexes with different compositions have been identified which probably have different functions.

The protein resides in the cellular thylakoid membrane. The catalysed reaction is a plastoquinone + NADH + (n+1) H(+)(in) = a plastoquinol + NAD(+) + n H(+)(out). It carries out the reaction a plastoquinone + NADPH + (n+1) H(+)(in) = a plastoquinol + NADP(+) + n H(+)(out). Functionally, NDH-1 shuttles electrons from an unknown electron donor, via FMN and iron-sulfur (Fe-S) centers, to quinones in the respiratory and/or the photosynthetic chain. The immediate electron acceptor for the enzyme in this species is believed to be plastoquinone. Couples the redox reaction to proton translocation, and thus conserves the redox energy in a proton gradient. Cyanobacterial NDH-1 also plays a role in inorganic carbon-concentration. In Trichormus variabilis (strain ATCC 29413 / PCC 7937) (Anabaena variabilis), this protein is NAD(P)H-quinone oxidoreductase subunit M.